The primary structure comprises 270 residues: Orotidine 5'-phosphate decarboxylase (270 aa).

Substrate contacts are provided by residues Asp-41, 63–65 (KTH), 95–104 (DRKFADIGNT), Tyr-221, and Arg-239. Lys-97 acts as the Proton donor in catalysis.

The protein belongs to the OMP decarboxylase family.

It catalyses the reaction orotidine 5'-phosphate + H(+) = UMP + CO2. It participates in pyrimidine metabolism; UMP biosynthesis via de novo pathway; UMP from orotate: step 2/2. This chain is Orotidine 5'-phosphate decarboxylase (URA3), found in Candida boidinii (Yeast).